Here is a 325-residue protein sequence, read N- to C-terminus: Hydroxymethylglutaryl-CoA lyase, mitochondrial (325 aa).

The transit peptide at 1–27 (MAAMTKALPRRLVGLASLRAVSTSSMD) directs the protein to the mitochondrion. A Pyruvate carboxyltransferase domain is found at 33-300 (VKIVEVGPRD…HTGVNLQKLL (268 aa)). Arg41 is a binding site for substrate. Asp42 lines the a divalent metal cation pocket. N6-acetyllysine; alternate is present on Lys48. Lys48 carries the N6-succinyllysine; alternate modification. Residue Lys111 is modified to N6-acetyllysine. 2 positions are modified to N6-acetyllysine; alternate: Lys137 and Lys179. N6-succinyllysine; alternate is present on residues Lys137 and Lys179. A divalent metal cation is bound by residues His233 and His235. Cys266 is an active-site residue. Asn275 contributes to the a divalent metal cation binding site. The Microbody targeting signal motif lies at 323-325 (CKL). An N6-acetyllysine modification is found at Lys324.

The protein belongs to the HMG-CoA lyase family. In terms of assembly, homodimer; disulfide-linked. Can also form homotetramers.

The protein localises to the mitochondrion matrix. It is found in the peroxisome. The enzyme catalyses (3S)-3-hydroxy-3-methylglutaryl-CoA = acetoacetate + acetyl-CoA. The protein operates within metabolic intermediate metabolism; (S)-3-hydroxy-3-methylglutaryl-CoA degradation; acetoacetate from (S)-3-hydroxy-3-methylglutaryl-CoA: step 1/1. Its function is as follows. Mitochondrial 3-hydroxy-3-methylglutaryl-CoA lyase that catalyzes a cation-dependent cleavage of (S)-3-hydroxy-3-methylglutaryl-CoA into acetyl-CoA and acetoacetate, a key step in ketogenesis. Terminal step in leucine catabolism. Ketone bodies (beta-hydroxybutyrate, acetoacetate and acetone) are essential as an alternative source of energy to glucose, as lipid precursors and as regulators of metabolism. The sequence is that of Hydroxymethylglutaryl-CoA lyase, mitochondrial (HMGCL) from Macaca fascicularis (Crab-eating macaque).